Here is a 419-residue protein sequence, read N- to C-terminus: Interferon regulatory factor 3 (419 aa).

At Thr3 the chain carries Phosphothreonine. A DNA-binding region (IRF tryptophan pentad repeat) is located at residues 5-111 (KPRILPWLVS…DPHKVYEFVT (107 aa)). Ser14 is modified (phosphoserine). The residue at position 75 (Thr75) is a Phosphothreonine. A phosphoserine mark is found at Ser97, Ser123, and Ser135. Residues 140–419 (PKLFDGLILG…DMDFQATGNI (280 aa)) form a mediates interaction with ZDHHC11 region. Residue Lys188 forms a Glycyl lysine isopeptide (Lys-Gly) (interchain with G-Cter in ISG15) linkage. The segment at 194–353 (EQWEFEVTAF…MWPQDQPWVK (160 aa)) is interaction with HERC5. Residues Thr230, Thr237, and Thr246 each carry the phosphothreonine modification. Glycyl lysine isopeptide (Lys-Gly) (interchain with G-Cter in ISG15) cross-links involve residues Lys353 and Lys359. Lys359 carries the N6-acetyllysine modification. Ser378 is subject to Phosphoserine. Position 379 is a diphosphoserine (Ser379). Residue Ser379 is modified to Phosphoserine; by TBK1. Residue Ser388 is modified to Phosphoserine; by IKKE. Ser390 is modified (phosphoserine). Thr396 bears the Phosphothreonine mark.

This sequence belongs to the IRF family. Monomer. Homodimer; phosphorylation-induced. Interacts (when phosphorylated) with CREBBP. Interacts with MAVS (via phosphorylated pLxIS motif). Interacts with TICAM1 (via phosphorylated pLxIS motif). Interacts with STING1 (via phosphorylated pLxIS motif). Interacts with IKBKE and TBK1. Interacts with TICAM2. Interacts with RBCK1. Interacts with HERC5. Interacts with DDX3X; the interaction allows the phosphorylation and activation of IRF3 by IKBKE. Interacts with TRIM21 and ULK1, in the presence of TRIM21; this interaction leads to IRF3 degradation by autophagy. Interacts with RIOK3; RIOK3 probably mediates the interaction of TBK1 with IRF3. Interacts with ILRUN; the interaction inhibits IRF3 binding to its DNA consensus sequence. Interacts with LYAR; this interaction impairs IRF3 DNA-binding activity. Interacts with TRAF3. Interacts with ZDHHC11; ZDHHC11 recruits IRF3 to STING1 upon DNA virus infection and thereby promotes IRF3 activation. Interacts with HSP90AA1; the interaction mediates IRF3 association with TOMM70. Interacts with BCL2; the interaction decreases upon Sendai virus infection. Interacts with BAX; the interaction is direct, increases upon virus infection and mediates the formation of the apoptosis complex TOMM70:HSP90AA1:IRF3:BAX. Interacts with DDX56. Interacts with NBR1. Post-translationally, constitutively phosphorylated on many Ser/Thr residues. Activated following phosphorylation by TBK1 and IKBKE. Innate adapter proteins, such as MAVS, STING1 or TICAM1, are first activated by viral RNA, cytosolic DNA, and bacterial lipopolysaccharide (LPS), respectively, leading to activation of the kinases TBK1 and IKBKE. These kinases then phosphorylate the adapter proteins on the pLxIS motif, leading to recruitment of IRF3, thereby licensing IRF3 for phosphorylation by TBK1. Phosphorylation at Ser-379 is followed by pyrophosphorylation at the same residue, promoting phosphorylation at Ser-388. Phosphorylated IRF3 dissociates from the adapter proteins, dimerizes, and then enters the nucleus to induce IFNs. In terms of processing, pyrophosphorylated by UAP1 following phosphorylation at Ser-379 by TBK1. Pyrophosphorylation promotes subsequent phosphorylation at Ser-388, leading to homodimerization of IRF3. Acetylation at Lys-359 by KAT8 inhibits recruimtent to promoters and transcription factor activity. Acetylation by KAT8 is promoted by phosphorylation at Ser-388. Post-translationally, ubiquitinated; ubiquitination involves RBCK1 leading to proteasomal degradation. Polyubiquitinated; ubiquitination involves TRIM21 leading to proteasomal degradation. Ubiquitinated by UBE3C, leading to its degradation. Deubiquitinated by USP5 on both 'Lys-48'-linked unanchored and 'Lys-63'-linked anchored polyubiquitin, leading to inhibition of anti-RNA viral innate immunity. In terms of processing, ISGylated by HERC5 resulting in sustained IRF3 activation and in the inhibition of IRF3 ubiquitination by disrupting PIN1 binding. The phosphorylation state of IRF3 does not alter ISGylation. Proteolytically cleaved by apoptotic caspases during apoptosis, leading to its inactivation. Cleavage by CASP3 during virus-induced apoptosis inactivates it, preventing cytokine overproduction.

Its subcellular location is the cytoplasm. It is found in the nucleus. The protein resides in the mitochondrion. With respect to regulation, in the absence of viral infection, maintained as a monomer in an autoinhibited state. Phosphorylation by TBK1 and IKBKE disrupts this autoinhibition leading to the liberation of the DNA-binding and dimerization activities and its nuclear localization where it can activate type I IFN and ISG genes. Phosphorylation and activation follow the following steps: innate adapter proteins, such as MAVS, STING1 or TICAM1, are first activated by viral RNA, cytosolic DNA and bacterial lipopolysaccharide (LPS), respectively, leading to activation of the kinases TBK1 and IKBKE. These kinases then phosphorylate the adapter proteins on their pLxIS motif, leading to recruitment of IRF3, thereby licensing IRF3 for phosphorylation by TBK1. Phosphorylated IRF3 dissociates from the adapter proteins, dimerizes, and then enters the nucleus to induce IFNs. In terms of biological role, key transcriptional regulator of type I interferon (IFN)-dependent immune responses which plays a critical role in the innate immune response against DNA and RNA viruses. Regulates the transcription of type I IFN genes (IFN-alpha and IFN-beta) and IFN-stimulated genes (ISG) by binding to an interferon-stimulated response element (ISRE) in their promoters. Acts as a more potent activator of the IFN-beta (IFNB) gene than the IFN-alpha (IFNA) gene and plays a critical role in both the early and late phases of the IFNA/B gene induction. Found in an inactive form in the cytoplasm of uninfected cells and following viral infection, double-stranded RNA (dsRNA), or toll-like receptor (TLR) signaling, is phosphorylated by IKBKE and TBK1 kinases. This induces a conformational change, leading to its dimerization and nuclear localization and association with CREB binding protein (CREBBP) to form dsRNA-activated factor 1 (DRAF1), a complex which activates the transcription of the type I IFN and ISG genes. Can activate distinct gene expression programs in macrophages and can induce significant apoptosis in primary macrophages. This is Interferon regulatory factor 3 (Irf3) from Mus musculus (Mouse).